We begin with the raw amino-acid sequence, 301 residues long: Fructokinase (301 aa).

4 residues coordinate Zn(2+): His-165, Cys-181, His-184, and Cys-187.

Belongs to the ROK (NagC/XylR) family. The cofactor is Mg(2+).

It catalyses the reaction D-fructose + ATP = D-fructose 6-phosphate + ADP + H(+). Its activity is regulated as follows. Inhibition by zinc ions. This is Fructokinase (frk) from Zymomonas mobilis subsp. mobilis (strain ATCC 31821 / ZM4 / CP4).